We begin with the raw amino-acid sequence, 351 residues long: tRNA (guanine(26)-N(2))-dimethyltransferase (351 aa).

The 347-residue stretch at 4–350 (VLRREGAVQF…AGYGEVKRAL (347 aa)) folds into the Trm1 methyltransferase domain. Arg39, Arg65, Asp83, Asp109, and Ala110 together coordinate S-adenosyl-L-methionine.

It belongs to the class I-like SAM-binding methyltransferase superfamily. Trm1 family.

It carries out the reaction guanosine(26) in tRNA + 2 S-adenosyl-L-methionine = N(2)-dimethylguanosine(26) in tRNA + 2 S-adenosyl-L-homocysteine + 2 H(+). Dimethylates a single guanine residue at position 26 of a number of tRNAs using S-adenosyl-L-methionine as donor of the methyl groups. In Pyrobaculum neutrophilum (strain DSM 2338 / JCM 9278 / NBRC 100436 / V24Sta) (Thermoproteus neutrophilus), this protein is tRNA (guanine(26)-N(2))-dimethyltransferase.